Here is a 308-residue protein sequence, read N- to C-terminus: HPr kinase/phosphorylase (308 aa).

Active-site residues include histidine 141 and lysine 162. 156–163 (GKSGVGKS) provides a ligand contact to ATP. Serine 163 is a binding site for Mg(2+). The active-site Proton acceptor; for phosphorylation activity. Proton donor; for dephosphorylation activity is aspartate 180. The interval 204–213 (MEIRGVGILD) is important for the catalytic mechanism of both phosphorylation and dephosphorylation. Residue glutamate 205 participates in Mg(2+) binding. The active site involves arginine 246. Positions 267-272 (PVKPGR) are important for the catalytic mechanism of dephosphorylation.

Belongs to the HPrK/P family. Homohexamer. Mg(2+) serves as cofactor.

The catalysed reaction is [HPr protein]-L-serine + ATP = [HPr protein]-O-phospho-L-serine + ADP + H(+). The enzyme catalyses [HPr protein]-O-phospho-L-serine + phosphate + H(+) = [HPr protein]-L-serine + diphosphate. Functionally, catalyzes the ATP- as well as the pyrophosphate-dependent phosphorylation of a specific serine residue in HPr, a phosphocarrier protein of the phosphoenolpyruvate-dependent sugar phosphotransferase system (PTS). HprK/P also catalyzes the pyrophosphate-producing, inorganic phosphate-dependent dephosphorylation (phosphorolysis) of seryl-phosphorylated HPr (P-Ser-HPr). The two antagonistic activities of HprK/P are regulated by several intracellular metabolites, which change their concentration in response to the absence or presence of rapidly metabolisable carbon sources (glucose, fructose, etc.) in the growth medium. Therefore, by controlling the phosphorylation state of HPr, HPrK/P is a sensor enzyme that plays a major role in the regulation of carbon metabolism and sugar transport: it mediates carbon catabolite repression (CCR), and regulates PTS-catalyzed carbohydrate uptake and inducer exclusion. The sequence is that of HPr kinase/phosphorylase from Peptoclostridium acidaminophilum (Eubacterium acidaminophilum).